Here is a 320-residue protein sequence, read N- to C-terminus: MLYKRNPQLNKNGELIHLLSTEGLSKDILTHILDTAANFVSVNDREVKKVPLLRGKSVFNLFFENSTRTRTTFEIAAKRLSADVFNLDIARSSASKGESLLDTIANLSAMAADIFVVRHSESGAPYLIAQHVAPHVHVVNAGDGRHAHPTQGLLDMYTIRHYKKDFANLRVAIVGDVLHSRVARSDIHALTTLGAAEVRVVGPRTLVPPDLAQMGVRVFHTLEEGIRDCDVIIMLRLQNERMSGALLPSSQEYFKSFGLTAEKLRLAKPDAIVMHPGPINRGVEIDSEVVDGPQAVILSQVSFGIAVRMAVMSIVAGNEA.

Carbamoyl phosphate contacts are provided by Arg68 and Thr69. Lys96 is a binding site for L-aspartate. 3 residues coordinate carbamoyl phosphate: Arg118, His148, and Gln151. L-aspartate-binding residues include Arg181 and Arg236. Residues Gly277 and Pro278 each contribute to the carbamoyl phosphate site.

Belongs to the aspartate/ornithine carbamoyltransferase superfamily. ATCase family. As to quaternary structure, heterododecamer (2C3:3R2) of six catalytic PyrB chains organized as two trimers (C3), and six regulatory PyrI chains organized as three dimers (R2).

The catalysed reaction is carbamoyl phosphate + L-aspartate = N-carbamoyl-L-aspartate + phosphate + H(+). It functions in the pathway pyrimidine metabolism; UMP biosynthesis via de novo pathway; (S)-dihydroorotate from bicarbonate: step 2/3. Functionally, catalyzes the condensation of carbamoyl phosphate and aspartate to form carbamoyl aspartate and inorganic phosphate, the committed step in the de novo pyrimidine nucleotide biosynthesis pathway. The protein is Aspartate carbamoyltransferase catalytic subunit of Delftia acidovorans (strain DSM 14801 / SPH-1).